Reading from the N-terminus, the 91-residue chain is Small ribosomal subunit protein uS19 (91 aa).

Belongs to the universal ribosomal protein uS19 family.

In terms of biological role, protein S19 forms a complex with S13 that binds strongly to the 16S ribosomal RNA. This is Small ribosomal subunit protein uS19 from Delftia acidovorans (strain DSM 14801 / SPH-1).